A 246-amino-acid polypeptide reads, in one-letter code: Carboxylesterase (246 aa).

The Nucleophile role is filled by Ser-93. Active-site charge relay system residues include Asp-192 and His-222.

It belongs to the lipase/esterase LIP3/BchO family. In terms of assembly, homodimer.

The catalysed reaction is a carboxylic ester + H2O = an alcohol + a carboxylate + H(+). In terms of biological role, involved in the detoxification of xenobiotics. Shows maximal activity with C6 substrates, with gradually decreasing activity from C8 to C12 substrates. No activity for higher chain length substrates acids rather than long-chain ones. The sequence is that of Carboxylesterase (est) from Bacillus subtilis (strain 168).